Consider the following 587-residue polypeptide: DELLA protein GAIP-B (587 aa).

A disordered region spans residues 1-23 (MKREHHHLHPRPDPPSMAAAPNG). The DELLA motif motif lies at 46–50 (DELLA). Residues 209 to 577 (VDSQENGIQL…RPLIVTSAWK (369 aa)) enclose the GRAS domain. Residues 216–270 (IQLVHALMACAEAVQQNNLNLAEALEKRIGYLAVSQAGAMRKVATFFAEALARRI) are leucine repeat I (LRI). Residues 288 to 353 (QLHFYESSPY…SGPPAFRLTG (66 aa)) form a VHIID region. The VHIID signature appears at 319–323 (VHVID). Residues 367 to 399 (DVGWKLAKLVETINVEFEYRGFVANSLADLDAS) are leucine repeat II (LRII). The segment at 411-498 (VVVNSVFELH…EMYLGKQICN (88 aa)) is PFYRE. The LXXLL motif motif lies at 419–423 (LHKLL). Residues 501–577 (ACEGSDRVEW…RPLIVTSAWK (77 aa)) form an SAW region.

It belongs to the GRAS family. DELLA subfamily. Phosphorylated. In terms of processing, ubiquitinated. Upon GA application it is ubiquitinated, leading to its subsequent degradation.

The protein resides in the nucleus. Its function is as follows. Probable transcriptional regulator that acts as a repressor of the gibberellin (GA) signaling pathway. Probably acts by participating in large multiprotein complexes that represses transcription of GA-inducible genes. Upon GA application, it is degraded by the proteasome, allowing the GA signaling pathway. This Cucurbita maxima (Pumpkin) protein is DELLA protein GAIP-B (GAIPB).